We begin with the raw amino-acid sequence, 623 residues long: tRNA uridine 5-carboxymethylaminomethyl modification enzyme MnmG (623 aa).

Residues 11-16 (GAGHAG), Val-123, and Ser-178 each bind FAD. 270 to 284 (GPRYCPSIETKIVTF) is an NAD(+) binding site. Residue Gln-367 coordinates FAD.

The protein belongs to the MnmG family. In terms of assembly, homodimer. Heterotetramer of two MnmE and two MnmG subunits. Requires FAD as cofactor.

The protein resides in the cytoplasm. NAD-binding protein involved in the addition of a carboxymethylaminomethyl (cmnm) group at the wobble position (U34) of certain tRNAs, forming tRNA-cmnm(5)s(2)U34. This is tRNA uridine 5-carboxymethylaminomethyl modification enzyme MnmG from Phocaeicola vulgatus (strain ATCC 8482 / DSM 1447 / JCM 5826 / CCUG 4940 / NBRC 14291 / NCTC 11154) (Bacteroides vulgatus).